Reading from the N-terminus, the 104-residue chain is MFVVTNRITVKKGYAKQMAPNFTKGGPIESLKGFEGIEVWQIDKDDYSEDMYVNSWWETEEDFKNWVNSDVFKQAHKNTGKSEDSPVIKSEIVKSNVLSSLNRR.

The region spanning 2–92 is the ABM domain; sequence FVVTNRITVK…EDSPVIKSEI (91 aa). A Fe cation-binding site is contributed by Asn6. His76 contributes to the heme binding site.

Belongs to the antibiotic biosynthesis monooxygenase family. Heme-degrading monooxygenase IsdG subfamily. In terms of assembly, homodimer.

The protein resides in the cytoplasm. It carries out the reaction heme b + 5 AH2 + 4 O2 + 2 H(+) = delta-staphylobilin + Fe(2+) + formaldehyde + 5 A + 4 H2O. The catalysed reaction is heme b + 5 AH2 + 4 O2 + 2 H(+) = beta-staphylobilin + Fe(2+) + formaldehyde + 5 A + 4 H2O. In terms of biological role, allows bacterial pathogens to use the host heme as an iron source. Catalyzes the oxidative degradation of the heme macrocyclic porphyrin ring to the oxo-bilirubin chromophore staphylobilin (a mixture of the linear tetrapyrroles 5-oxo-delta-bilirubin and 15-oxo-beta-bilirubin) in the presence of a suitable electron donor such as ascorbate or NADPH--cytochrome P450 reductase, with subsequent release of free iron. The polypeptide is Heme oxygenase (staphylobilin-producing) (isdG) (Staphylococcus epidermidis (strain ATCC 35984 / DSM 28319 / BCRC 17069 / CCUG 31568 / BM 3577 / RP62A)).